A 24-amino-acid polypeptide reads, in one-letter code: Flavin reductase (NADPH) (24 aa).

Gly9, Thr11, Gly12, and Thr14 together coordinate NADP(+).

It belongs to the BLVRB family. Monomer. As to expression, detected in erythrocytes (at protein level).

Its subcellular location is the cytoplasm. It catalyses the reaction reduced riboflavin + NADP(+) = riboflavin + NADPH + 2 H(+). It carries out the reaction bilirubin IXbeta + NADP(+) = biliverdin IXbeta + NADPH + H(+). The catalysed reaction is FMNH2 + NAD(+) = FMN + NADH + 2 H(+). The enzyme catalyses FMNH2 + NADP(+) = FMN + NADPH + 2 H(+). It catalyses the reaction S-nitroso-CoA + L-cysteinyl-[protein] = S-nitroso-L-cysteinyl-[protein] + CoA. It carries out the reaction L-cysteinyl-[SCAN] + S-nitroso-CoA = S-nitroso-L-cysteinyl-[SCAN] + CoA. The catalysed reaction is S-nitroso-L-cysteinyl-[SCAN] + L-cysteinyl-[protein] = L-cysteinyl-[SCAN] + S-nitroso-L-cysteinyl-[protein]. Functionally, enzyme that can both act as a NAD(P)H-dependent reductase and a S-nitroso-CoA-dependent nitrosyltransferase. Promotes fetal heme degradation during development. Also expressed in adult tissues, where it acts as a regulator of hematopoiesis, intermediary metabolism (glutaminolysis, glycolysis, TCA cycle and pentose phosphate pathway) and insulin signaling. Has a broad specificity oxidoreductase activity by catalyzing the NAD(P)H-dependent reduction of a variety of flavins, such as riboflavin, FAD or FMN, biliverdins, methemoglobin and PQQ (pyrroloquinoline quinone). Contributes to fetal heme catabolism by catalyzing reduction of biliverdin IXbeta into bilirubin IXbeta in the liver. Biliverdin IXbeta, which constitutes the major heme catabolite in the fetus is not present in adult. Does not reduce bilirubin IXalpha. Can also reduce the complexed Fe(3+) iron to Fe(2+) in the presence of FMN and NADPH. Acts as a protein nitrosyltransferase by catalyzing nitrosylation of cysteine residues of target proteins, such as HMOX2, INSR and IRS1. S-nitroso-CoA-dependent nitrosyltransferase activity is mediated via a 'ping-pong' mechanism: BLVRB first associates with both S-nitroso-CoA and protein substrate, nitric oxide group is then transferred from S-nitroso-CoA to Cys residues of BLVRB and from S-nitroso-BLVRB to the protein substrate. Inhibits insulin signaling by mediating nitrosylation of INSR and IRS1, leading to their inhibition. The protein is Flavin reductase (NADPH) (BLVRB) of Aquarana catesbeiana (American bullfrog).